The following is a 496-amino-acid chain: Ribose import ATP-binding protein RbsA (496 aa).

ABC transporter domains lie at 5-241 (LQMK…VGRE) and 252-496 (SPGE…VGGE). Residue 37–44 (GENGAGKS) coordinates ATP.

Belongs to the ABC transporter superfamily. Ribose importer (TC 3.A.1.2.1) family. In terms of assembly, the complex is composed of an ATP-binding protein (RbsA), two transmembrane proteins (RbsC) and a solute-binding protein (RbsB).

The protein localises to the cell membrane. It catalyses the reaction D-ribose(out) + ATP + H2O = D-ribose(in) + ADP + phosphate + H(+). Part of the ABC transporter complex RbsABC involved in ribose import. Responsible for energy coupling to the transport system. This chain is Ribose import ATP-binding protein RbsA, found in Caldanaerobacter subterraneus subsp. tengcongensis (strain DSM 15242 / JCM 11007 / NBRC 100824 / MB4) (Thermoanaerobacter tengcongensis).